The sequence spans 451 residues: NADP-specific glutamate dehydrogenase (451 aa).

Lysine 114 is an active-site residue.

Belongs to the Glu/Leu/Phe/Val dehydrogenases family. As to quaternary structure, homohexamer.

It carries out the reaction L-glutamate + NADP(+) + H2O = 2-oxoglutarate + NH4(+) + NADPH + H(+). The chain is NADP-specific glutamate dehydrogenase (GDH2) from Fusarium fujikuroi (Bakanae and foot rot disease fungus).